The following is a 54-amino-acid chain: uncharacterized protein (54 aa).

The span at 1-28 shows a compositional bias: basic and acidic residues; sequence MDRKKDEIQRKYREQMREKKEREKEDGS. Positions 1 to 29 are disordered; that stretch reads MDRKKDEIQRKYREQMREKKEREKEDGSS. Residues 31–51 traverse the membrane as a helical segment; sequence TFEIVVVLAIIILMFFFNSVF.

It is found in the cell membrane. This is an uncharacterized protein from Bacillus subtilis (strain 168).